The following is a 287-amino-acid chain: Phosphatidylserine decarboxylase proenzyme (287 aa).

Active-site charge relay system; for autoendoproteolytic cleavage activity residues include Asp90, His147, and Ser252. The active-site Schiff-base intermediate with substrate; via pyruvic acid; for decarboxylase activity is the Ser252. At Ser252 the chain carries Pyruvic acid (Ser); by autocatalysis.

This sequence belongs to the phosphatidylserine decarboxylase family. PSD-B subfamily. Prokaryotic type I sub-subfamily. In terms of assembly, heterodimer of a large membrane-associated beta subunit and a small pyruvoyl-containing alpha subunit. Requires pyruvate as cofactor. In terms of processing, is synthesized initially as an inactive proenzyme. Formation of the active enzyme involves a self-maturation process in which the active site pyruvoyl group is generated from an internal serine residue via an autocatalytic post-translational modification. Two non-identical subunits are generated from the proenzyme in this reaction, and the pyruvate is formed at the N-terminus of the alpha chain, which is derived from the carboxyl end of the proenzyme. The autoendoproteolytic cleavage occurs by a canonical serine protease mechanism, in which the side chain hydroxyl group of the serine supplies its oxygen atom to form the C-terminus of the beta chain, while the remainder of the serine residue undergoes an oxidative deamination to produce ammonia and the pyruvoyl prosthetic group on the alpha chain. During this reaction, the Ser that is part of the protease active site of the proenzyme becomes the pyruvoyl prosthetic group, which constitutes an essential element of the active site of the mature decarboxylase.

It is found in the cell membrane. The catalysed reaction is a 1,2-diacyl-sn-glycero-3-phospho-L-serine + H(+) = a 1,2-diacyl-sn-glycero-3-phosphoethanolamine + CO2. The protein operates within phospholipid metabolism; phosphatidylethanolamine biosynthesis; phosphatidylethanolamine from CDP-diacylglycerol: step 2/2. In terms of biological role, catalyzes the formation of phosphatidylethanolamine (PtdEtn) from phosphatidylserine (PtdSer). This is Phosphatidylserine decarboxylase proenzyme from Pseudomonas putida (strain ATCC 47054 / DSM 6125 / CFBP 8728 / NCIMB 11950 / KT2440).